The chain runs to 81 residues: ATP synthase subunit c (81 aa).

2 consecutive transmembrane segments (helical) span residues 7-27 (AASVLAAALAVGLAAIGPGIG) and 57-77 (LAFMEALTIYGLVVALVLLFA).

Belongs to the ATPase C chain family. As to quaternary structure, F-type ATPases have 2 components, F(1) - the catalytic core - and F(0) - the membrane proton channel. F(1) has five subunits: alpha(3), beta(3), gamma(1), delta(1), epsilon(1). F(0) has four main subunits: a(1), b(1), b'(1) and c(10-14). The alpha and beta chains form an alternating ring which encloses part of the gamma chain. F(1) is attached to F(0) by a central stalk formed by the gamma and epsilon chains, while a peripheral stalk is formed by the delta, b and b' chains.

The protein localises to the cellular thylakoid membrane. In terms of biological role, f(1)F(0) ATP synthase produces ATP from ADP in the presence of a proton or sodium gradient. F-type ATPases consist of two structural domains, F(1) containing the extramembraneous catalytic core and F(0) containing the membrane proton channel, linked together by a central stalk and a peripheral stalk. During catalysis, ATP synthesis in the catalytic domain of F(1) is coupled via a rotary mechanism of the central stalk subunits to proton translocation. Its function is as follows. Key component of the F(0) channel; it plays a direct role in translocation across the membrane. A homomeric c-ring of between 10-14 subunits forms the central stalk rotor element with the F(1) delta and epsilon subunits. In Synechococcus elongatus (strain ATCC 33912 / PCC 7942 / FACHB-805) (Anacystis nidulans R2), this protein is ATP synthase subunit c.